The sequence spans 140 residues: Lipoprotein MlpG (140 aa).

The signal sequence occupies residues 1-17; sequence MKIINILFCLFLLMLNG. A lipid anchor (N-palmitoyl cysteine) is attached at Cys-18. Cys-18 carries the S-diacylglycerol cysteine lipid modification. Residues 22–57 are disordered; it reads DTNTKQTKSRQKRDLTQKEATQEKPKSKSKEDLLRE. Residues 33–57 are compositionally biased toward basic and acidic residues; sequence KRDLTQKEATQEKPKSKSKEDLLRE.

It belongs to the Multicopy lipoprotein (Mlp) family.

The protein resides in the cell outer membrane. Functionally, an outer membrane protein that may participate in pathogenesis. Some human Lyme disease patients have antibodies against this protein. The Mlp proteins probably undergo intragenic recombination, generating new alleles. The chain is Lipoprotein MlpG from Borreliella burgdorferi (strain ATCC 35210 / DSM 4680 / CIP 102532 / B31) (Borrelia burgdorferi).